The chain runs to 340 residues: MEITKSAAGTLNQQDVSKYVLTNQQGTQVAVLTWGATLQEFSVVEDGKRHSLIVNKPDLAGYDHNPYYLCQALGRVAGRIAGAQFELDGQTVHLEANEEPNASHGGPHGFTFVNWDATTNQTADTASVVLTHTSTPADDRYPGNLETTITYTLTEENRLDITFDAQSDAATLFNPTIHTYFNVTDDQHDLDQQWVKLSGDKRLVLDQAKIPTGEMVPTAGTGYDFSQPRTVKDGLDQLHQTGQVEYDDAFVVEPSKDTPIATIGDTTGHREVSIYSDRNGLVVFTANPTDDARADVRDYNALAMEAQTLPDAIHHADFGDVVLPANQPVEHTISYQYTRK.

Residue arginine 79 coordinates substrate. Histidine 178 acts as the Proton donor in catalysis. Position 247 (aspartate 247) interacts with substrate. Residue glutamate 305 is the Proton acceptor of the active site.

Belongs to the aldose epimerase family.

The catalysed reaction is alpha-maltose = beta-maltose. Its pathway is carbohydrate metabolism; hexose metabolism. Its function is as follows. Catalyzes the interconversion of alpha and beta anomers of maltose. This Levilactobacillus brevis (strain ATCC 367 / BCRC 12310 / CIP 105137 / JCM 1170 / LMG 11437 / NCIMB 947 / NCTC 947) (Lactobacillus brevis) protein is Maltose epimerase.